Reading from the N-terminus, the 74-residue chain is uncharacterized protein (74 aa).

Disordered regions lie at residues 1–26 and 46–74; these read MNGPRYAHSNYGGNKGGPSNSTSGVF and ITNSPNSNSRGSSSSSSTSKSSSKTSFTQ. A helical membrane pass occupies residues 34-50; the sequence is VSNKSIMLISLKITNSP. The segment covering 47–74 has biased composition (low complexity); it reads TNSPNSNSRGSSSSSSTSKSSSKTSFTQ.

The protein localises to the membrane. This is an uncharacterized protein from Dictyostelium discoideum (Social amoeba).